Reading from the N-terminus, the 157-residue chain is Ribosomal RNA large subunit methyltransferase H (157 aa).

Residues Leu73, Gly105, and 124 to 129 (LSKMTF) each bind S-adenosyl-L-methionine.

The protein belongs to the RNA methyltransferase RlmH family. In terms of assembly, homodimer.

The protein localises to the cytoplasm. It carries out the reaction pseudouridine(1915) in 23S rRNA + S-adenosyl-L-methionine = N(3)-methylpseudouridine(1915) in 23S rRNA + S-adenosyl-L-homocysteine + H(+). Specifically methylates the pseudouridine at position 1915 (m3Psi1915) in 23S rRNA. The polypeptide is Ribosomal RNA large subunit methyltransferase H (Parabacteroides distasonis (strain ATCC 8503 / DSM 20701 / CIP 104284 / JCM 5825 / NCTC 11152)).